A 723-amino-acid polypeptide reads, in one-letter code: Transmembrane channel-like protein 7 (723 aa).

The interval 1 to 21 (MSESSASALQLGRPSRQPAVH) is disordered. The Extracellular segment spans residues 1 to 168 (MSESSASALQ…GIQSYFSFLR (168 aa)). N24 carries N-linked (GlcNAc...) asparagine glycosylation. The tract at residues 51 to 70 (RRRTTVHSRDKQSGTLLKST) is disordered. The N-linked (GlcNAc...) asparagine glycan is linked to N84. S89 bears the Phosphoserine mark. An N-linked (GlcNAc...) asparagine glycan is attached at N96. Residues 169–189 (FLVLLNLVIFLIIFMLVLLPI) traverse the membrane as a helical segment. The Cytoplasmic portion of the chain corresponds to 190–219 (LLTKYKITNSSFVLIPFKDTDIQCTVYPVS). Residues 220–240 (SSGLIYFYSYIIDLLSGTGFL) form a helical membrane-spanning segment. Residues 241 to 263 (EETSLFYGHYTIDGVKFQNFTYD) lie on the Extracellular side of the membrane. N259 is a glycosylation site (N-linked (GlcNAc...) asparagine). A helical membrane pass occupies residues 264–284 (LPLAYLISTIAYLALSLLWIV). Residues 285–362 (KRSVEGFKIN…EETIRIYSLR (78 aa)) are Cytoplasmic-facing. Residues 363 to 383 (LFLNCIVLAVLGACFYAIYVA) form a helical membrane-spanning segment. The Extracellular portion of the chain corresponds to 384-404 (TVFSQEHMKKEIDKMVFGENL). A helical transmembrane segment spans residues 405-425 (LILYLPSIVITLANFITPMIF). The Cytoplasmic portion of the chain corresponds to 426-494 (AKIIRYEDYS…PCWETQVGQE (69 aa)). The chain crosses the membrane as a helical span at residues 495 to 515 (MYKLMIFDFIIILAVTLFVDF). Topologically, residues 516–555 (PRKLLVTYCSSWKLIQCWGQQEFAIPDNVLGIVYGQTICW) are extracellular. A helical membrane pass occupies residues 556–576 (IGAFFSPLLPAIATLKFIIIF). The Cytoplasmic segment spans residues 577 to 601 (YVKEWSLLYTCRPSPRPFRASNSNF). The helical transmembrane segment at 602–622 (FFLLVLLIGLCLAIIPLTISI) threads the bilayer. Topologically, residues 623–665 (SRIPSSKACGPFTNFNTTWEVIPKTVSTFPSSLQSFIHGVTSE) are extracellular. The N-linked (GlcNAc...) asparagine glycan is linked to N638. The helical transmembrane segment at 666 to 686 (AFAVPFFMIICLIMFYFIALA) threads the bilayer. Residues 687-723 (GAHKRVVIQLREQLSLESRDKRYLIQKLTEAQRDTRN) are Cytoplasmic-facing.

It belongs to the TMC family. Interacts with PIEZO2; the interaction inhibits PIEZO2-conducted mechanically activated currents.

The protein localises to the membrane. In terms of biological role, acts as an inhibitory modulator of PIEZO2 mechanosensitive channel in dorsal root ganglion (DRG) neurons through physical interactions or interference with the interaction between Piezo2 and the cytoskeleton. The sequence is that of Transmembrane channel-like protein 7 (TMC7) from Macaca fascicularis (Crab-eating macaque).